A 150-amino-acid polypeptide reads, in one-letter code: Ribosomal RNA large subunit methyltransferase H (150 aa).

S-adenosyl-L-methionine contacts are provided by residues Ala100 and 118–123 (LSEMTF).

This sequence belongs to the RNA methyltransferase RlmH family. Homodimer.

It is found in the cytoplasm. It catalyses the reaction pseudouridine(1915) in 23S rRNA + S-adenosyl-L-methionine = N(3)-methylpseudouridine(1915) in 23S rRNA + S-adenosyl-L-homocysteine + H(+). In terms of biological role, specifically methylates the pseudouridine at position 1915 (m3Psi1915) in 23S rRNA. In Helicobacter pylori (strain HPAG1), this protein is Ribosomal RNA large subunit methyltransferase H.